Reading from the N-terminus, the 611-residue chain is Threonine--tRNA ligase (611 aa).

Residues 1–25 (MAGPDRKPVSSAAATTPAPSAPVVL) form a disordered region. Positions 9–24 (VSSAAATTPAPSAPVV) are enriched in low complexity. The tract at residues 209 to 502 (DHRRIGKDLD…MTENYAGDYP (294 aa)) is catalytic. Zn(2+)-binding residues include C302, H353, and H479.

Belongs to the class-II aminoacyl-tRNA synthetase family. In terms of assembly, homodimer. Requires Zn(2+) as cofactor.

Its subcellular location is the cytoplasm. The catalysed reaction is tRNA(Thr) + L-threonine + ATP = L-threonyl-tRNA(Thr) + AMP + diphosphate + H(+). In terms of biological role, catalyzes the attachment of threonine to tRNA(Thr) in a two-step reaction: L-threonine is first activated by ATP to form Thr-AMP and then transferred to the acceptor end of tRNA(Thr). Also edits incorrectly charged L-seryl-tRNA(Thr). In Parasynechococcus marenigrum (strain WH8102), this protein is Threonine--tRNA ligase.